The chain runs to 200 residues: Inner membrane-spanning protein YciB (200 aa).

6 consecutive transmembrane segments (helical) span residues 1–21 (MPPL…FFAN), 37–57 (IGAP…IALA), 66–86 (LPIM…LTLW), 103–123 (LFGG…GYVF), 136–156 (KLTL…EIVW), and 167–187 (FKVW…MPLI).

It belongs to the YciB family.

It is found in the cell inner membrane. Plays a role in cell envelope biogenesis, maintenance of cell envelope integrity and membrane homeostasis. The polypeptide is Inner membrane-spanning protein YciB (Brucella suis biovar 1 (strain 1330)).